A 135-amino-acid polypeptide reads, in one-letter code: UPF0355 protein SACOL0457 (135 aa).

It belongs to the UPF0355 family.

The protein is UPF0355 protein SACOL0457 of Staphylococcus aureus (strain COL).